We begin with the raw amino-acid sequence, 81 residues long: Defensin-like protein 266 (81 aa).

The first 26 residues, M1 to A26, serve as a signal peptide directing secretion. Disulfide bonds link C40/C58, C46/C63, and C50/C65.

The protein belongs to the DEFL family.

The protein resides in the secreted. This Arabidopsis thaliana (Mouse-ear cress) protein is Defensin-like protein 266.